The primary structure comprises 218 residues: LexA repressor (218 aa).

The H-T-H motif DNA-binding region spans 28-48 (RAEIAAEFGFSSPNSAEEHLR). Residues serine 136 and lysine 173 each act as for autocatalytic cleavage activity in the active site.

This sequence belongs to the peptidase S24 family. In terms of assembly, homodimer.

It carries out the reaction Hydrolysis of Ala-|-Gly bond in repressor LexA.. Represses a number of genes involved in the response to DNA damage (SOS response), including recA and lexA. In the presence of single-stranded DNA, RecA interacts with LexA causing an autocatalytic cleavage which disrupts the DNA-binding part of LexA, leading to derepression of the SOS regulon and eventually DNA repair. This Cupriavidus metallidurans (strain ATCC 43123 / DSM 2839 / NBRC 102507 / CH34) (Ralstonia metallidurans) protein is LexA repressor.